A 945-amino-acid polypeptide reads, in one-letter code: Isoleucine--tRNA ligase (945 aa).

The 'HIGH' region signature appears at 66–76 (PYANGDIHLGH). Residue Glu-581 participates in L-isoleucyl-5'-AMP binding. The 'KMSKS' region motif lies at 622-626 (KMSKS). Position 625 (Lys-625) interacts with ATP. The Zn(2+) site is built by Cys-908, Cys-911, Cys-928, and Cys-931.

It belongs to the class-I aminoacyl-tRNA synthetase family. IleS type 1 subfamily. Monomer. Requires Zn(2+) as cofactor.

Its subcellular location is the cytoplasm. It catalyses the reaction tRNA(Ile) + L-isoleucine + ATP = L-isoleucyl-tRNA(Ile) + AMP + diphosphate. In terms of biological role, catalyzes the attachment of isoleucine to tRNA(Ile). As IleRS can inadvertently accommodate and process structurally similar amino acids such as valine, to avoid such errors it has two additional distinct tRNA(Ile)-dependent editing activities. One activity is designated as 'pretransfer' editing and involves the hydrolysis of activated Val-AMP. The other activity is designated 'posttransfer' editing and involves deacylation of mischarged Val-tRNA(Ile). The chain is Isoleucine--tRNA ligase from Paraburkholderia phymatum (strain DSM 17167 / CIP 108236 / LMG 21445 / STM815) (Burkholderia phymatum).